The primary structure comprises 270 residues: uncharacterized protein (270 aa).

10 helical membrane-spanning segments follow: residues A12 to G32, T35 to L55, T64 to Q84, V88 to L108, T117 to E137, L138 to L158, I171 to G191, G194 to F214, A226 to G246, and T248 to W268. EamA domains follow at residues V19–T133 and L150–R269.

The protein belongs to the EamA transporter family.

It is found in the cell membrane. This is an uncharacterized protein from Archaeoglobus fulgidus (strain ATCC 49558 / DSM 4304 / JCM 9628 / NBRC 100126 / VC-16).